The following is a 458-amino-acid chain: Probable alpha-L-glutamate ligase (458 aa).

The unknown stretch occupies residues 1–162; sequence MSDNKFIIGS…YGVKTAKKSG (162 aa). The interval 163-458 is alpha-L-glutamate ligase; that stretch reads LKIGLLASNP…IEKKLGWKAD (296 aa). Residues 267–450 form the ATP-grasp domain; that stretch reads LQLLQKNNLD…IAGAMIESIE (184 aa). Residues Lys-304, 341–342, Asp-350, and 374–376 each bind ATP; these read EF and RAN. Asp-411, Glu-423, and Asn-425 together coordinate Mg(2+). Residues Asp-411, Glu-423, and Asn-425 each coordinate Mn(2+).

This sequence in the C-terminal section; belongs to the RimK family. The cofactor is Mg(2+). Requires Mn(2+) as cofactor.

This is Probable alpha-L-glutamate ligase from Shewanella pealeana (strain ATCC 700345 / ANG-SQ1).